We begin with the raw amino-acid sequence, 222 residues long: Phosphoenolpyruvate guanylyltransferase (222 aa).

Residues T134, G150, and S153 each contribute to the phosphoenolpyruvate site.

This sequence belongs to the CofC family.

It carries out the reaction phosphoenolpyruvate + GTP + H(+) = enolpyruvoyl-2-diphospho-5'-guanosine + diphosphate. It participates in cofactor biosynthesis; coenzyme F420 biosynthesis. Guanylyltransferase that catalyzes the activation of phosphoenolpyruvate (PEP) as enolpyruvoyl-2-diphospho-5'-guanosine, via the condensation of PEP with GTP. It is involved in the biosynthesis of coenzyme F420, a hydride carrier cofactor. This Roseiflexus sp. (strain RS-1) protein is Phosphoenolpyruvate guanylyltransferase.